The chain runs to 275 residues: AA9 family lytic polysaccharide monooxygenase D (275 aa).

The N-terminal stretch at 1–17 (MKLSLLAIAAIAPFVSA) is a signal peptide. Histidine 18 and histidine 101 together coordinate Cu(2+). A disulfide bridge links cysteine 67 with cysteine 189. Histidine 176 is an O2 binding site. Residue tyrosine 186 participates in Cu(2+) binding. Asparagine 220 is a glycosylation site (N-linked (GlcNAc...) asparagine).

The protein belongs to the polysaccharide monooxygenase AA9 family. Cu(2+) serves as cofactor.

Its subcellular location is the secreted. The enzyme catalyses [(1-&gt;4)-beta-D-glucosyl]n+m + reduced acceptor + O2 = 4-dehydro-beta-D-glucosyl-[(1-&gt;4)-beta-D-glucosyl]n-1 + [(1-&gt;4)-beta-D-glucosyl]m + acceptor + H2O.. Lytic polysaccharide monooxygenase (LPMO) that depolymerizes crystalline and amorphous polysaccharides via the oxidation of scissile alpha- or beta-(1-4)-glycosidic bonds, yielding C1 or C4 oxidation products. Catalysis by LPMOs requires the reduction of the active-site copper from Cu(II) to Cu(I) by a reducing agent and H(2)O(2) or O(2) as a cosubstrate. This Aspergillus tamarii protein is AA9 family lytic polysaccharide monooxygenase D.